A 143-amino-acid chain; its full sequence is Transcriptional regulator MraZ (143 aa).

SpoVT-AbrB domains are found at residues 5-47 (TYTP…PREE) and 76-119 (ADEQ…DAAA).

It belongs to the MraZ family. In terms of assembly, forms oligomers.

The protein resides in the cytoplasm. Its subcellular location is the nucleoid. This is Transcriptional regulator MraZ from Corynebacterium diphtheriae (strain ATCC 700971 / NCTC 13129 / Biotype gravis).